A 358-amino-acid polypeptide reads, in one-letter code: Phospho-N-acetylmuramoyl-pentapeptide-transferase (358 aa).

Transmembrane regions (helical) follow at residues 24-44, 73-93, 95-115, 134-154, 169-189, 197-217, 233-253, 261-281, 286-306, and 335-355; these read FRSI…GPWV, TMGG…WADL, NVFI…GFVD, MFWQ…LPGF, ELGI…SNAV, GLAI…CYIA, GAGE…GFLW, VFMG…LAVL, ILLV…IFQV, and KIIV…ISTL.

This sequence belongs to the glycosyltransferase 4 family. MraY subfamily. It depends on Mg(2+) as a cofactor.

It localises to the cell inner membrane. The catalysed reaction is UDP-N-acetyl-alpha-D-muramoyl-L-alanyl-gamma-D-glutamyl-meso-2,6-diaminopimeloyl-D-alanyl-D-alanine + di-trans,octa-cis-undecaprenyl phosphate = di-trans,octa-cis-undecaprenyl diphospho-N-acetyl-alpha-D-muramoyl-L-alanyl-D-glutamyl-meso-2,6-diaminopimeloyl-D-alanyl-D-alanine + UMP. Its pathway is cell wall biogenesis; peptidoglycan biosynthesis. Functionally, catalyzes the initial step of the lipid cycle reactions in the biosynthesis of the cell wall peptidoglycan: transfers peptidoglycan precursor phospho-MurNAc-pentapeptide from UDP-MurNAc-pentapeptide onto the lipid carrier undecaprenyl phosphate, yielding undecaprenyl-pyrophosphoryl-MurNAc-pentapeptide, known as lipid I. This is Phospho-N-acetylmuramoyl-pentapeptide-transferase from Geobacter sp. (strain M21).